The chain runs to 81 residues: MSHSVKIYDTCIGCTQCVRACPTDVLEMIPWDGCKAKQIASAPRTEDCVGCKRCESACPTDFLSVRVYLWHETTRSMGIAY.

2 4Fe-4S ferredoxin-type domains span residues Ser-2–Trp-31 and Ile-39–Tyr-68. [4Fe-4S] cluster contacts are provided by Cys-11, Cys-14, Cys-17, Cys-21, Cys-48, Cys-51, Cys-54, and Cys-58.

In terms of assembly, the eukaryotic PSI reaction center is composed of at least 11 subunits. Requires [4Fe-4S] cluster as cofactor.

The protein localises to the plastid. It is found in the chloroplast thylakoid membrane. The catalysed reaction is reduced [plastocyanin] + hnu + oxidized [2Fe-2S]-[ferredoxin] = oxidized [plastocyanin] + reduced [2Fe-2S]-[ferredoxin]. In terms of biological role, apoprotein for the two 4Fe-4S centers FA and FB of photosystem I (PSI); essential for photochemical activity. FB is the terminal electron acceptor of PSI, donating electrons to ferredoxin. The C-terminus interacts with PsaA/B/D and helps assemble the protein into the PSI complex. Required for binding of PsaD and PsaE to PSI. PSI is a plastocyanin-ferredoxin oxidoreductase, converting photonic excitation into a charge separation, which transfers an electron from the donor P700 chlorophyll pair to the spectroscopically characterized acceptors A0, A1, FX, FA and FB in turn. The chain is Photosystem I iron-sulfur center from Helianthus annuus (Common sunflower).